Consider the following 128-residue polypeptide: Large ribosomal subunit protein bL12 (128 aa).

It belongs to the bacterial ribosomal protein bL12 family. In terms of assembly, homodimer. Part of the ribosomal stalk of the 50S ribosomal subunit. Forms a multimeric L10(L12)X complex, where L10 forms an elongated spine to which 2 to 4 L12 dimers bind in a sequential fashion. Binds GTP-bound translation factors.

Forms part of the ribosomal stalk which helps the ribosome interact with GTP-bound translation factors. Is thus essential for accurate translation. This is Large ribosomal subunit protein bL12 from Synechococcus sp. (strain ATCC 27144 / PCC 6301 / SAUG 1402/1) (Anacystis nidulans).